The following is a 457-amino-acid chain: Multidrug resistance protein MdtK (457 aa).

Helical transmembrane passes span 11 to 31, 53 to 73, 93 to 113, 127 to 147, 160 to 180, 189 to 209, 243 to 263, 276 to 296, 314 to 334, 350 to 370, 387 to 407, and 418 to 438; these read LLALAIPVILAQIAQTAMGFV, IWLPAILFGHGLLLALTPVIA, WLAGFVSVLIMLVLWNAGYII, AVGYLRALLWGAPGYLFFQVA, GMVMGFIGLLVNIPVNYIFIY, GGVGCGVATAAVYWVMFLAMV, LPIALALFFEVTLFAVVALLV, IALNFSSLMFVLPMSLAAAVT, AARTGLMVGVCMATLTAIFTV, VVTLAAHLMLLAAVYQISDSI, IFYITFTAYWVLGLPSGYILA, and PAGFWIGFIIGLTSAAIMMML.

It belongs to the multi antimicrobial extrusion (MATE) (TC 2.A.66.1) family. MdtK subfamily.

It is found in the cell inner membrane. In terms of biological role, multidrug efflux pump that functions probably as a Na(+)/drug antiporter. This Escherichia coli (strain SE11) protein is Multidrug resistance protein MdtK.